Here is a 375-residue protein sequence, read N- to C-terminus: Fructose-1,6-bisphosphate aldolase/phosphatase (375 aa).

D15 serves as the catalytic Proton acceptor; for FBP phosphatase activity. D15, H22, D56, and D57 together coordinate Mg(2+). H22 is a binding site for beta-D-fructose 1,6-bisphosphate. H22 is a binding site for dihydroxyacetone phosphate. Y94 contacts beta-D-fructose 1,6-bisphosphate. Q98 lines the Mg(2+) pocket. Residue 107–108 participates in beta-D-fructose 1,6-bisphosphate binding; it reads GN. D135 contributes to the Mg(2+) binding site. Residue K136 coordinates beta-D-fructose 1,6-bisphosphate. K136 contacts dihydroxyacetone phosphate. The active-site Proton donor/acceptor; for FBP aldolase activity is the Y237. Mg(2+) contacts are provided by K240, D241, and D242. K240 acts as the Schiff-base intermediate with DHAP; for FBP aldolase activity in catalysis. Residues 250-251, R274, D295, and Y357 each bind beta-D-fructose 1,6-bisphosphate; that span reads QS. Positions 274 and 295 each coordinate dihydroxyacetone phosphate.

This sequence belongs to the FBP aldolase/phosphatase family. Homooctamer; dimer of tetramers. Mg(2+) serves as cofactor.

The catalysed reaction is beta-D-fructose 1,6-bisphosphate + H2O = beta-D-fructose 6-phosphate + phosphate. It carries out the reaction beta-D-fructose 1,6-bisphosphate = D-glyceraldehyde 3-phosphate + dihydroxyacetone phosphate. It participates in carbohydrate biosynthesis; gluconeogenesis. With respect to regulation, activity is enhanced by dithioerythritol, and is slightly inhibited by fructose 2,6-bisphosphate. AMP does not inhibit the enzyme activity. Functionally, catalyzes two subsequent steps in gluconeogenesis: the aldol condensation of dihydroxyacetone phosphate (DHAP) and glyceraldehyde-3-phosphate (GA3P) to fructose-1,6-bisphosphate (FBP), and the dephosphorylation of FBP to fructose-6-phosphate (F6P). Does not display hydrolase activity against fructose 2,6-bisphosphate, fructose 6-phosphate, fructose 1-phosphate, glucose 6-phosphate, and glucose 1-phosphate. Exhibits only negligible activity on inositol-1-phosphate (IMP). Is essential for the growth of T.kodakaraensis under gluconeogenic conditions. This Thermococcus kodakarensis (strain ATCC BAA-918 / JCM 12380 / KOD1) (Pyrococcus kodakaraensis (strain KOD1)) protein is Fructose-1,6-bisphosphate aldolase/phosphatase.